Here is a 259-residue protein sequence, read N- to C-terminus: Protein SODIUM POTASSIUM ROOT DEFECTIVE 2 (259 aa).

Residues proline 141 to aspartate 165 form a disordered region. Basic and acidic residues predominate over residues aspartate 151–aspartate 165. Residues glutamine 180 to asparagine 246 enclose the HMA domain. A metal cation contacts are provided by cysteine 191 and cysteine 194.

This chain is Protein SODIUM POTASSIUM ROOT DEFECTIVE 2, found in Arabidopsis thaliana (Mouse-ear cress).